Reading from the N-terminus, the 495-residue chain is MKSQLLSLAVAVSTISQGVVGQEPFGWPFKPMVTQDDLQNKIKLKDIMAGIEKLQSFSDAHPEKNRVFGGNGHKDTVEWIYNELKATGYYNVKKQEQVHLWSHAEAALSANGKDLKASAMSYSPPANKIMAELVVAKNNGCNATDYPENTQGKIVLIQRGVCSFGEKSSQAGDAKAIGAVVYNNVPGSLAGTLGGLDKRHVPTAGLSQEDGKNLASLVASGKVDVTMNVVSLFENRTTWNVIAETKGGDHNNVVMLGAHSDSVDAGPGINDNGSGSIGIMTVAKALTNFKLNNAVRFAWWTAEEFGLLGSTFYVDSLDDRELHKVKLYLNFDMIGSPNFANQIYDGDGSAYNMTGPAGSAEIEYLFEKFFDDQGLPHQPTAFTGRSDYSAFIKRNVPAGGLFTGAEVVKTPEQVKLFGGEAGVAYDKNYHGKGDTVANINKGAIFLNTRAIAYSVAEYARSLKGFPTRPKTGKRAVNPQYAKMPGGGCGHHTVFM.

The first 21 residues, Met1 to Gly21, serve as a signal peptide directing secretion. In terms of domain architecture, PA spans Pro124–Val218. N-linked (GlcNAc...) asparagine glycosylation is found at Asn142 and Asn235. His259 and Asp271 together coordinate Zn(2+). Asn272 is a glycosylation site (N-linked (GlcNAc...) asparagine). The Proton acceptor role is filled by Glu303. Zn(2+) is bound by residues Glu304 and Asp332. Residue Asn352 is glycosylated (N-linked (GlcNAc...) asparagine). His430 contacts Zn(2+).

It belongs to the peptidase M28 family. M28A subfamily. In terms of assembly, monomer. It depends on Zn(2+) as a cofactor.

It localises to the secreted. Functionally, extracellular aminopeptidase that releases a wide variety of amino acids from natural peptides and contributes to pathogenicity. This chain is Leucine aminopeptidase 2 (LAP2), found in Trichophyton tonsurans (Scalp ringworm fungus).